The sequence spans 356 residues: Tyrosine recombinase XerS (356 aa).

A Core-binding (CB) domain is found at 16–121 (IMPWYVLDYY…ALSSLYKYLT (106 aa)). The Tyr recombinase domain occupies 169–354 (AFLDYVDKEY…VNDEQKNALD (186 aa)). Catalysis depends on residues Arg-210, Lys-234, His-306, Arg-309, and His-332. The active-site O-(3'-phospho-DNA)-tyrosine intermediate is the Tyr-341.

This sequence belongs to the 'phage' integrase family. XerS subfamily.

The protein localises to the cytoplasm. Its activity is regulated as follows. FtsK is required for recombination. In terms of biological role, site-specific tyrosine recombinase, which acts by catalyzing the cutting and rejoining of the recombining DNA molecules. Essential to convert dimers of the bacterial chromosome into monomers to permit their segregation at cell division. The polypeptide is Tyrosine recombinase XerS (Streptococcus pyogenes serotype M1).